A 507-amino-acid chain; its full sequence is DNA nucleotidylexotransferase (507 aa).

A Nuclear localization signal motif is present at residues 11 to 17 (PLRKKAK). A BRCT domain is found at 27 to 124 (QHNVKFKEIV…RPVEIQNRHL (98 aa)). Residues 254–258 (VGLKT) form an involved in DNA binding region. A 2'-deoxyribonucleoside 5'-triphosphate-binding positions include 329 to 334 (GFRRGK) and 338 to 341 (HDVD). Mg(2+) contacts are provided by aspartate 339, aspartate 341, and aspartate 431. Residue 446-447 (GW) coordinates a 2'-deoxyribonucleoside 5'-triphosphate.

This sequence belongs to the DNA polymerase type-X family. Mg(2+) serves as cofactor. Found in the thymus and not in the spleen, kidney, intestine, or liver.

Its subcellular location is the nucleus. The catalysed reaction is DNA(n) + a 2'-deoxyribonucleoside 5'-triphosphate = DNA(n+1) + diphosphate. Template-independent DNA polymerase which catalyzes the random addition of deoxynucleoside 5'-triphosphate to the 3'-end of a DNA initiator. One of the in vivo functions of this enzyme is the addition of nucleotides at the junction (N region) of rearranged Ig heavy chain and T-cell receptor gene segments during the maturation of B- and T-cells. This chain is DNA nucleotidylexotransferase (dntt), found in Xenopus laevis (African clawed frog).